Here is a 374-residue protein sequence, read N- to C-terminus: Chaperone protein DnaJ (374 aa).

Residues 5-70 (DYYEVLGVNR…RKRASYDQFG (66 aa)) enclose the J domain. Residues 133-210 (GLSRTIKVPT…CHGQGRQQQT (78 aa)) form a CR-type zinc finger. Zn(2+) contacts are provided by Cys146, Cys149, Cys162, Cys165, Cys184, Cys187, Cys198, and Cys201. 4 CXXCXGXG motif repeats span residues 146 to 153 (CKTCNGSG), 162 to 169 (CPRCNGSG), 184 to 191 (CSVCRGRG), and 198 to 205 (CTDCHGQG).

The protein belongs to the DnaJ family. Homodimer. The cofactor is Zn(2+).

The protein resides in the cytoplasm. Its function is as follows. Participates actively in the response to hyperosmotic and heat shock by preventing the aggregation of stress-denatured proteins and by disaggregating proteins, also in an autonomous, DnaK-independent fashion. Unfolded proteins bind initially to DnaJ; upon interaction with the DnaJ-bound protein, DnaK hydrolyzes its bound ATP, resulting in the formation of a stable complex. GrpE releases ADP from DnaK; ATP binding to DnaK triggers the release of the substrate protein, thus completing the reaction cycle. Several rounds of ATP-dependent interactions between DnaJ, DnaK and GrpE are required for fully efficient folding. Also involved, together with DnaK and GrpE, in the DNA replication of plasmids through activation of initiation proteins. The polypeptide is Chaperone protein DnaJ (Coxiella burnetii (strain CbuG_Q212) (Coxiella burnetii (strain Q212))).